Here is a 151-residue protein sequence, read N- to C-terminus: Non-specific lipid transfer protein GPI-anchored 30 (151 aa).

An N-terminal signal peptide occupies residues 1 to 22; sequence MMMGMKFFSFYVVLLLVAASSG. Disulfide bonds link Cys-32-Cys-69, Cys-39-Cys-53, Cys-54-Cys-97, and Cys-67-Cys-106. Residue Asn-44 is glycosylated (N-linked (GlcNAc...) asparagine). The GPI-anchor amidated serine moiety is linked to residue Ser-120. A propeptide spans 121–151 (removed in mature form); it reads SSIGNTFSQSYWMTTLAIAATVLSYCHHIIS.

The protein belongs to the plant LTP family. In terms of tissue distribution, expressed in vascular tissues of all organs. Expressed in seedlings, preferentially in hypocotyls and roots. Also observed in siliques.

The protein resides in the cell membrane. Lipid transfer protein that promotes the number of phloem (pro)cambial and pericycle cells. The sequence is that of Non-specific lipid transfer protein GPI-anchored 30 from Arabidopsis thaliana (Mouse-ear cress).